Here is a 446-residue protein sequence, read N- to C-terminus: Argininosuccinate lyase (446 aa).

The protein belongs to the lyase 1 family. Argininosuccinate lyase subfamily.

Its subcellular location is the cytoplasm. The catalysed reaction is 2-(N(omega)-L-arginino)succinate = fumarate + L-arginine. It participates in amino-acid biosynthesis; L-arginine biosynthesis; L-arginine from L-ornithine and carbamoyl phosphate: step 3/3. This Parabacteroides distasonis (strain ATCC 8503 / DSM 20701 / CIP 104284 / JCM 5825 / NCTC 11152) protein is Argininosuccinate lyase.